The primary structure comprises 596 residues: Elongation factor 4 (596 aa).

Residues 2–184 (KNIRNFAIIA…SIVKYIPPPE (183 aa)) enclose the tr-type G domain. Residues 14–19 (DHGKST) and 131–134 (NKID) each bind GTP.

The protein belongs to the TRAFAC class translation factor GTPase superfamily. Classic translation factor GTPase family. LepA subfamily.

It localises to the cell inner membrane. It catalyses the reaction GTP + H2O = GDP + phosphate + H(+). In terms of biological role, required for accurate and efficient protein synthesis under certain stress conditions. May act as a fidelity factor of the translation reaction, by catalyzing a one-codon backward translocation of tRNAs on improperly translocated ribosomes. Back-translocation proceeds from a post-translocation (POST) complex to a pre-translocation (PRE) complex, thus giving elongation factor G a second chance to translocate the tRNAs correctly. Binds to ribosomes in a GTP-dependent manner. This Neorickettsia sennetsu (strain ATCC VR-367 / Miyayama) (Ehrlichia sennetsu) protein is Elongation factor 4.